The chain runs to 177 residues: Interleukin-1 receptor antagonist protein (177 aa).

An N-terminal signal peptide occupies residues 1 to 25 (MRPSRSTRRHLISLLLFLFHSETAC). Cys91 and Cys141 form a disulfide bridge. The N-linked (GlcNAc...) asparagine glycan is linked to Asn109.

The protein belongs to the IL-1 family.

Its subcellular location is the secreted. Functionally, anti-inflammatory antagonist of interleukin-1 family of proinflammatory cytokines such as interleukin-1beta/IL1B and interleukin-1alpha/IL1A. Protects from immune dysregulation and uncontrolled systemic inflammation triggered by IL1 for a range of innate stimulatory agents such as pathogens. In Oryctolagus cuniculus (Rabbit), this protein is Interleukin-1 receptor antagonist protein (IL1RN).